A 392-amino-acid chain; its full sequence is ATP phosphoribosyltransferase regulatory subunit (392 aa).

It belongs to the class-II aminoacyl-tRNA synthetase family. HisZ subfamily. Heteromultimer composed of HisG and HisZ subunits.

Its subcellular location is the cytoplasm. It participates in amino-acid biosynthesis; L-histidine biosynthesis; L-histidine from 5-phospho-alpha-D-ribose 1-diphosphate: step 1/9. In terms of biological role, required for the first step of histidine biosynthesis. May allow the feedback regulation of ATP phosphoribosyltransferase activity by histidine. The protein is ATP phosphoribosyltransferase regulatory subunit of Gloeobacter violaceus (strain ATCC 29082 / PCC 7421).